A 70-amino-acid polypeptide reads, in one-letter code: uncharacterized protein (70 aa).

This is an uncharacterized protein from Bacillus subtilis (strain 168).